Here is a 196-residue protein sequence, read N- to C-terminus: RNA-binding protein with multiple splicing 2 (196 aa).

The 78-residue stretch at 20-97 (RTLFVSGLPI…QTLRLEFAKA (78 aa)) folds into the RRM domain. Residues 30–40 (DIKPRELYLLF) are important for homodimerization.

As to quaternary structure, homodimer. Expressed in developing heart, pronephros, retina and epiphysis. In adult, high expression in heart, moderate in kidney, undetectable in liver, lung and skeletal muscle.

It is found in the cytoplasm. The protein localises to the nucleus. It localises to the stress granule. Its function is as follows. RNA-binding protein involved in the regulation of smooth muscle cell differentiation and proliferation in the gastrointestinal system. Binds NOG mRNA, the major inhibitor of the bone morphogenetic protein (BMP) pathway. Mediates an increase of NOG mRNA levels, thereby contributing to the negative regulation of BMP signaling pathway and promoting reversible dedifferentiation and proliferation of smooth muscle cells. Acts as a pre-mRNA alternative splicing regulator. Mediates ACTN1 and FLNB alternative splicing. Likely binds to mRNA tandem CAC trinucleotide or CA dinucleotide motifs. The chain is RNA-binding protein with multiple splicing 2 from Xenopus laevis (African clawed frog).